A 352-amino-acid polypeptide reads, in one-letter code: MLEQLAYLHGAPTARGILKAQAADFVVNEDLGFEPCGEGEHIFVRVRKTGENTAWVAGLLADAAGVNRSAVTWAGLKDRHAVTEQWFGIHLPGKAEPDLSVIESDSIQILQVKRHNKKLRVGYLKGNHFILRLTGLEQADGLESRLQAIAEQGVPNYYGEQRFGRGGNNLEAAKAMFAGKRIKDRNKRSLYLSAARSMLFNAIVSARIEQGLAHQLLAGDCVMLKGSHSIFSEEGVTPELAARLASGDVQLTAPQWGRGRLASQGAAAEFEQSVLAPYHDWCDGLEKAGLDQDRRPLLLKPQAMSWQLEGTVLILSFFLPAGAFATSVVRELMQAEEADHGFRNQSDENSGQ.

The active-site Nucleophile is the aspartate 78. Residues 153–299 enclose the TRUD domain; sequence GVPNYYGEQR…LDQDRRPLLL (147 aa).

The protein belongs to the pseudouridine synthase TruD family.

The catalysed reaction is uridine(13) in tRNA = pseudouridine(13) in tRNA. Responsible for synthesis of pseudouridine from uracil-13 in transfer RNAs. This chain is tRNA pseudouridine synthase D, found in Aeromonas hydrophila subsp. hydrophila (strain ATCC 7966 / DSM 30187 / BCRC 13018 / CCUG 14551 / JCM 1027 / KCTC 2358 / NCIMB 9240 / NCTC 8049).